Here is a 316-residue protein sequence, read N- to C-terminus: Pantothenate kinase (316 aa).

ATP is bound at residue 95-102 (GSVAVGKS).

Belongs to the prokaryotic pantothenate kinase family.

The protein localises to the cytoplasm. It carries out the reaction (R)-pantothenate + ATP = (R)-4'-phosphopantothenate + ADP + H(+). Its pathway is cofactor biosynthesis; coenzyme A biosynthesis; CoA from (R)-pantothenate: step 1/5. This Salmonella gallinarum (strain 287/91 / NCTC 13346) protein is Pantothenate kinase.